An 83-amino-acid chain; its full sequence is Neurotoxin LmNaTx10 (83 aa).

The first 19 residues, 1–19 (MNFLIFIAVASSLALGALC), serve as a signal peptide directing secretion. Positions 21-80 (KEGYPYDGNNCRYICFRNQYCDDLCKKLKGESGYCYGWNQSCYCYGLPDTEKTKPDKRCH) constitute an LCN-type CS-alpha/beta domain. 4 cysteine pairs are disulfide-bonded: C31–C79, C35–C55, C41–C62, and C45–C64.

The protein belongs to the long (4 C-C) scorpion toxin superfamily. Sodium channel inhibitor family. Alpha subfamily. As to expression, expressed by the venom gland.

The protein resides in the secreted. Its function is as follows. Binds voltage-independently at site-3 of voltage-gated sodium channels (Nav) and inhibits the inactivation of the activated channels, thereby blocking neuronal transmission. This is Neurotoxin LmNaTx10 from Lychas mucronatus (Chinese swimming scorpion).